The chain runs to 151 residues: Deoxyuridine 5'-triphosphate nucleotidohydrolase (151 aa).

Residues 70-72 (RSG), N83, 87-89 (LID), and M97 each bind substrate.

Belongs to the dUTPase family. The cofactor is Mg(2+).

It carries out the reaction dUTP + H2O = dUMP + diphosphate + H(+). Its pathway is pyrimidine metabolism; dUMP biosynthesis; dUMP from dCTP (dUTP route): step 2/2. In terms of biological role, this enzyme is involved in nucleotide metabolism: it produces dUMP, the immediate precursor of thymidine nucleotides and it decreases the intracellular concentration of dUTP so that uracil cannot be incorporated into DNA. This is Deoxyuridine 5'-triphosphate nucleotidohydrolase from Actinobacillus pleuropneumoniae serotype 5b (strain L20).